The sequence spans 234 residues: MAHARDKAGAVMAMILICETSLIWTSSGSSTASAGNVTGTTAVTTPSPSASGPSTNQSTTLTTTSAPITTTAILSTNTTTVTFTGTTVTPVPTTSNASTINVTTKVTAQNITATEAGTGTSTGVTSNVTTRSSSTTSATTRITNATTLAPTLSSKGTSNATKTTAELPTVPDERQPSLSYGLPLWTLVFVGLTFLMLILIFAAGLMMSAKNKPLDEALLTNAVTRDPSLYKGLV.

A signal peptide spans 1–28; that stretch reads MAHARDKAGAVMAMILICETSLIWTSSG. Positions 29–62 are disordered; the sequence is SSTASAGNVTGTTAVTTPSPSASGPSTNQSTTLT. N36, N56, N77, N96, N101, N110, N127, N144, and N159 each carry an N-linked (GlcNAc...) asparagine; by host glycan. Residues 116 to 138 are disordered; it reads AGTGTSTGVTSNVTTRSSSTTSA. The chain crosses the membrane as a helical span at residues 187-207; that stretch reads LVFVGLTFLMLILIFAAGLMM.

This sequence belongs to the Epstein-Barr virus BDLF3 protein family.

The protein localises to the membrane. In Homo sapiens (Human), this protein is Glycoprotein BDLF3.